Consider the following 471-residue polypeptide: 6-phosphofructo-2-kinase/fructose-2,6-bisphosphatase 1 (471 aa).

Ser-2 carries the N-acetylserine modification. Residues 2–250 (SQEMGELTQT…VYYLMNIHVT (249 aa)) form a 6-phosphofructo-2-kinase region. At Ser-33 the chain carries Phosphoserine; by PKA. 49–57 (GLPARGKTY) contacts ATP. Beta-D-fructose 6-phosphate contacts are provided by Arg-82 and Arg-105. Asp-131 is a catalytic residue. 2 residues coordinate beta-D-fructose 6-phosphate: Thr-133 and Arg-139. Position 141 is a phosphoserine (Ser-141). Cys-161 is a catalytic residue. 170–175 (NIRQVK) contacts ATP. 3 residues coordinate beta-D-fructose 6-phosphate: Lys-175, Arg-196, and Tyr-200. A fructose-2,6-bisphosphatase region spans residues 251–471 (PRSIYLCRHG…EALDTVPAHY (221 aa)). Arg-258 serves as a coordination point for beta-D-fructose 2,6-bisphosphate. His-259 (tele-phosphohistidine intermediate) is an active-site residue. 3 residues coordinate beta-D-fructose 2,6-bisphosphate: Asn-265, Gly-271, and Arg-308. The active-site Proton donor/acceptor is the Glu-328. Residues Tyr-339, Arg-353, Lys-357, Tyr-368, Gln-394, and Arg-398 each coordinate beta-D-fructose 2,6-bisphosphate. Position 350–353 (350–353 (FALR)) interacts with ATP. Residues 394-398 (QAVMR) and Tyr-430 contribute to the ATP site.

In the C-terminal section; belongs to the phosphoglycerate mutase family. In terms of assembly, homodimer. Liver.

The enzyme catalyses beta-D-fructose 2,6-bisphosphate + H2O = beta-D-fructose 6-phosphate + phosphate. The catalysed reaction is beta-D-fructose 6-phosphate + ATP = beta-D-fructose 2,6-bisphosphate + ADP + H(+). Phosphorylation at Ser-33 inhibits the kinase and activates the bisphosphatase. Synthesis and degradation of fructose 2,6-bisphosphate. This is 6-phosphofructo-2-kinase/fructose-2,6-bisphosphatase 1 from Bos taurus (Bovine).